The sequence spans 437 residues: Glutamate-1-semialdehyde 2,1-aminomutase (437 aa).

K272 is subject to N6-(pyridoxal phosphate)lysine.

The protein belongs to the class-III pyridoxal-phosphate-dependent aminotransferase family. HemL subfamily. As to quaternary structure, homodimer. Requires pyridoxal 5'-phosphate as cofactor.

Its subcellular location is the cytoplasm. The enzyme catalyses (S)-4-amino-5-oxopentanoate = 5-aminolevulinate. The protein operates within porphyrin-containing compound metabolism; protoporphyrin-IX biosynthesis; 5-aminolevulinate from L-glutamyl-tRNA(Glu): step 2/2. The chain is Glutamate-1-semialdehyde 2,1-aminomutase from Moorella thermoacetica (strain ATCC 39073 / JCM 9320).